The following is a 55-amino-acid chain: ATP synthase F(0) complex subunit 8 (55 aa).

A helical membrane pass occupies residues 4–24 (LNPAPWFAILVFSWLVFLTVI). The interval 36–55 (EPTSQSTEKTKPEPWNWPWH) is disordered.

The protein belongs to the ATPase protein 8 family. As to quaternary structure, component of the ATP synthase complex composed at least of ATP5F1A/subunit alpha, ATP5F1B/subunit beta, ATP5MC1/subunit c (homooctomer), MT-ATP6/subunit a, MT-ATP8/subunit 8, ATP5ME/subunit e, ATP5MF/subunit f, ATP5MG/subunit g, ATP5MK/subunit k, ATP5MJ/subunit j, ATP5F1C/subunit gamma, ATP5F1D/subunit delta, ATP5F1E/subunit epsilon, ATP5PF/subunit F6, ATP5PB/subunit b, ATP5PD/subunit d, ATP5PO/subunit OSCP. ATP synthase complex consists of a soluble F(1) head domain (subunits alpha(3) and beta(3)) - the catalytic core - and a membrane F(0) domain - the membrane proton channel (subunits c, a, 8, e, f, g, k and j). These two domains are linked by a central stalk (subunits gamma, delta, and epsilon) rotating inside the F1 region and a stationary peripheral stalk (subunits F6, b, d, and OSCP).

The protein localises to the mitochondrion membrane. Subunit 8, of the mitochondrial membrane ATP synthase complex (F(1)F(0) ATP synthase or Complex V) that produces ATP from ADP in the presence of a proton gradient across the membrane which is generated by electron transport complexes of the respiratory chain. ATP synthase complex consist of a soluble F(1) head domain - the catalytic core - and a membrane F(1) domain - the membrane proton channel. These two domains are linked by a central stalk rotating inside the F(1) region and a stationary peripheral stalk. During catalysis, ATP synthesis in the catalytic domain of F(1) is coupled via a rotary mechanism of the central stalk subunits to proton translocation. In vivo, can only synthesize ATP although its ATP hydrolase activity can be activated artificially in vitro. Part of the complex F(0) domain. In Salvelinus alpinus (Arctic char), this protein is ATP synthase F(0) complex subunit 8.